A 204-amino-acid chain; its full sequence is Large ribosomal subunit protein uL4 (204 aa).

The segment at 47-69 (KAQKTRAEVSGGGKKPWRQKGTG) is disordered.

Belongs to the universal ribosomal protein uL4 family. As to quaternary structure, part of the 50S ribosomal subunit.

Its function is as follows. One of the primary rRNA binding proteins, this protein initially binds near the 5'-end of the 23S rRNA. It is important during the early stages of 50S assembly. It makes multiple contacts with different domains of the 23S rRNA in the assembled 50S subunit and ribosome. Forms part of the polypeptide exit tunnel. This chain is Large ribosomal subunit protein uL4, found in Cellvibrio japonicus (strain Ueda107) (Pseudomonas fluorescens subsp. cellulosa).